The sequence spans 344 residues: Sorting nexin-16 (344 aa).

Residues 1–10 (MATPYVPVPM) show a composition bias toward pro residues. The interval 1–72 (MATPYVPVPM…SASSMCGSPL (72 aa)) is disordered. Residues 14 to 26 (NSASSFTNNRNQR) show a composition bias toward polar residues. Residues 27-40 (SSSFGSVSTSSTSS) are compositionally biased toward low complexity. Polar residues predominate over residues 52–68 (LKQTNVQDQMDSASSMC). Positions 105 to 218 (DRPSTPTILG…EFLCLDDPPG (114 aa)) constitute a PX domain. Positions 144, 146, and 184 each coordinate a 1,2-diacyl-sn-glycero-3-phospho-(1D-myo-inositol-3-phosphate). Position 222 is a phosphoserine (Ser-222). Residues 223–278 (LEESRAFCETLEETNYHLQRELLEKQKEVESLKKLLGEKQLHIDALETRIRTLSLE) are a coiled coil.

This sequence belongs to the sorting nexin family. In terms of assembly, homooligomer. Interacts with EGFR.

Its subcellular location is the early endosome membrane. It localises to the late endosome membrane. The protein localises to the cytoplasm. It is found in the lysosome. Its function is as follows. May be involved in several stages of intracellular trafficking. Plays a role in protein transport from early to late endosomes. Plays a role in protein transport to the lysosome. Promotes degradation of EGFR after EGF signaling. In Mus musculus (Mouse), this protein is Sorting nexin-16 (Snx16).